The sequence spans 252 residues: Probable phosphatase Shewana3_2794 (252 aa).

Zn(2+)-binding residues include H8, H10, H16, H41, E74, H102, H132, D193, and H195.

It belongs to the PHP family. Zn(2+) serves as cofactor.

This is Probable phosphatase Shewana3_2794 from Shewanella sp. (strain ANA-3).